A 43-amino-acid polypeptide reads, in one-letter code: uncharacterized protein (43 aa).

Composition is skewed to polar residues over residues 1–19 and 33–43; these read MSQK…SGAS and PENSISKTFSK. The disordered stretch occupies residues 1–43; it reads MSQKLSFFQQNTRNGSGASRTLVIKPPTIQPKPENSISKTFSK.

This is an uncharacterized protein from Dictyostelium discoideum (Social amoeba).